The chain runs to 300 residues: Solute carrier family 25 member 35 (300 aa).

3 Solcar repeats span residues 1-90 (MDFL…AEAG), 100-193 (HSPA…TKDL), and 203-294 (QSWK…LRSL). 6 helical membrane passes run 38–58 (TYQR…KVDG), 59–79 (LAAL…MNGI), 91–119 (GYLH…GAYL), 169–190 (ALGG…FSST), 205–225 (WKLA…AMAP), and 277–300 (LGPH…TDTK).

Belongs to the mitochondrial carrier (TC 2.A.29) family.

It is found in the mitochondrion inner membrane. It catalyses the reaction a dicarboxylate(in) + sulfate(out) = a dicarboxylate(out) + sulfate(in). Putative antiporter that exchanges dicarboxylates and sulfur oxoanions across the inner membrane of mitochondria. The sequence is that of Solute carrier family 25 member 35 (SLC25A35) from Homo sapiens (Human).